The following is a 108-amino-acid chain: UPF0102 protein Sden_0272 (108 aa).

The protein belongs to the UPF0102 family.

This Shewanella denitrificans (strain OS217 / ATCC BAA-1090 / DSM 15013) protein is UPF0102 protein Sden_0272.